A 503-amino-acid polypeptide reads, in one-letter code: Probable cytosol aminopeptidase (503 aa).

2 residues coordinate Mn(2+): lysine 270 and aspartate 275. The active site involves lysine 282. Mn(2+) is bound by residues aspartate 293, aspartate 352, and glutamate 354. The active site involves arginine 356.

It belongs to the peptidase M17 family. Mn(2+) serves as cofactor.

The protein localises to the cytoplasm. The enzyme catalyses Release of an N-terminal amino acid, Xaa-|-Yaa-, in which Xaa is preferably Leu, but may be other amino acids including Pro although not Arg or Lys, and Yaa may be Pro. Amino acid amides and methyl esters are also readily hydrolyzed, but rates on arylamides are exceedingly low.. The catalysed reaction is Release of an N-terminal amino acid, preferentially leucine, but not glutamic or aspartic acids.. Functionally, presumably involved in the processing and regular turnover of intracellular proteins. Catalyzes the removal of unsubstituted N-terminal amino acids from various peptides. The protein is Probable cytosol aminopeptidase of Erwinia tasmaniensis (strain DSM 17950 / CFBP 7177 / CIP 109463 / NCPPB 4357 / Et1/99).